The sequence spans 330 residues: Protein RfbI (330 aa).

A 2Fe-2S ferredoxin-type domain is found at His3–Leu89. [2Fe-2S] cluster is bound by residues Cys37, Cys42, and Cys45. Residues Lys94–Arg192 form the FAD-binding FR-type domain.

It depends on [2Fe-2S] cluster as a cofactor.

Its pathway is bacterial outer membrane biogenesis; LPS O-antigen biosynthesis. The polypeptide is Protein RfbI (rfbI) (Salmonella typhimurium (strain LT2 / SGSC1412 / ATCC 700720)).